The primary structure comprises 85 residues: uncharacterized protein (85 aa).

This is an uncharacterized protein from Mycobacterium tuberculosis (strain CDC 1551 / Oshkosh).